Here is a 92-residue protein sequence, read N- to C-terminus: Small ribosomal subunit protein uS19c (92 aa).

Belongs to the universal ribosomal protein uS19 family.

Its subcellular location is the plastid. The protein resides in the chloroplast. Protein S19 forms a complex with S13 that binds strongly to the 16S ribosomal RNA. The sequence is that of Small ribosomal subunit protein uS19c from Huperzia lucidula (Shining clubmoss).